A 387-amino-acid polypeptide reads, in one-letter code: 3-ketoacyl-CoA thiolase (387 aa).

C91 functions as the Acyl-thioester intermediate in the catalytic mechanism. Active-site proton acceptor residues include H343 and C373.

It belongs to the thiolase-like superfamily. Thiolase family. As to quaternary structure, heterotetramer of two alpha chains (FadB) and two beta chains (FadA).

It is found in the cytoplasm. It catalyses the reaction an acyl-CoA + acetyl-CoA = a 3-oxoacyl-CoA + CoA. Its pathway is lipid metabolism; fatty acid beta-oxidation. Functionally, catalyzes the final step of fatty acid oxidation in which acetyl-CoA is released and the CoA ester of a fatty acid two carbons shorter is formed. The polypeptide is 3-ketoacyl-CoA thiolase (Shewanella baltica (strain OS185)).